A 405-amino-acid chain; its full sequence is Argininosuccinate synthase (405 aa).

Residues 10–18 and Ala37 each bind ATP; that span reads AYSGGLDTS. Residues Tyr88 and Ser93 each coordinate L-citrulline. ATP is bound at residue Gly118. Residues Thr120, Asn124, and Asp125 each contribute to the L-aspartate site. Asn124 lines the L-citrulline pocket. L-citrulline is bound by residues Arg128, Ser179, Ser188, Glu264, and Tyr276.

It belongs to the argininosuccinate synthase family. Type 1 subfamily. In terms of assembly, homotetramer.

The protein resides in the cytoplasm. The catalysed reaction is L-citrulline + L-aspartate + ATP = 2-(N(omega)-L-arginino)succinate + AMP + diphosphate + H(+). Its pathway is amino-acid biosynthesis; L-arginine biosynthesis; L-arginine from L-ornithine and carbamoyl phosphate: step 2/3. This chain is Argininosuccinate synthase, found in Ectopseudomonas mendocina (strain ymp) (Pseudomonas mendocina).